Consider the following 478-residue polypeptide: UDP-N-acetylmuramate--L-alanine ligase (478 aa).

Residue 120-126 (GSHGKTT) participates in ATP binding.

Belongs to the MurCDEF family.

It is found in the cytoplasm. It carries out the reaction UDP-N-acetyl-alpha-D-muramate + L-alanine + ATP = UDP-N-acetyl-alpha-D-muramoyl-L-alanine + ADP + phosphate + H(+). It functions in the pathway cell wall biogenesis; peptidoglycan biosynthesis. Functionally, cell wall formation. This Rickettsia felis (strain ATCC VR-1525 / URRWXCal2) (Rickettsia azadi) protein is UDP-N-acetylmuramate--L-alanine ligase.